The following is a 324-amino-acid chain: Germination protease (324 aa).

The propeptide occupies 1–10 (MIIVLGIRTD).

It belongs to the peptidase A25 family. As to quaternary structure, homotetramer. In terms of processing, autoproteolytically processed. The inactive tetrameric zymogen termed p46 autoprocesses to a smaller form termed p41, which is active only during spore germination.

It catalyses the reaction Endopeptidase action with P4 Glu or Asp, P1 preferably Glu &gt; Asp, P1' hydrophobic and P2' Ala.. Functionally, initiates the rapid degradation of small, acid-soluble proteins during spore germination. This Caldanaerobacter subterraneus subsp. tengcongensis (strain DSM 15242 / JCM 11007 / NBRC 100824 / MB4) (Thermoanaerobacter tengcongensis) protein is Germination protease.